The chain runs to 197 residues: TLE family member 5 (197 aa).

Positions 166 to 197 (LSALGSQTHLSKEDKNGHDGDTHQEDDGEKSD) are CCN domain. The segment at 170–197 (GSQTHLSKEDKNGHDGDTHQEDDGEKSD) is disordered. The span at 175–197 (LSKEDKNGHDGDTHQEDDGEKSD) shows a compositional bias: basic and acidic residues. Position 196 is a phosphoserine (Ser196).

The protein belongs to the WD repeat Groucho/TLE family. Homooligomer and heterooligomer with other family members. Binds TCF7 and the NF-kappa-B subunit RELA. Interacts with PHF12. Interacts (via Q domain) with SIX3. Interacts with SIX6. Ubiquitinated by XIAP/BIRC4. As to expression, ubiquitously expressed in developing embryos by midgestation, a wide expression is conserved in adult. In mouse, abundantly expressed in muscle, heart and brain.

It is found in the nucleus. In terms of biological role, transcriptional corepressor. Acts as a dominant repressor towards other family members. Inhibits NF-kappa-B-regulated gene expression. May be required for the initiation and maintenance of the differentiated state. Essential for the transcriptional repressor activity of SIX3 during retina and lens development. The sequence is that of TLE family member 5 from Mus musculus (Mouse).